Consider the following 295-residue polypeptide: (R)-3-hydroxydecanoyl-ACP:CoA transacylase (295 aa).

One can recognise an AB hydrolase-1 domain in the interval 28 to 254 (NTIILINGSL…VIRDAGHFLD (227 aa)).

It functions in the pathway polyester biosynthesis; polyhydroxyalkanoate biosynthesis. Functionally, catalyzes the transfer of the acyl moiety from in vitro synthesized 3-hydroxydecanoyl-CoA to acyl carrier protein. The protein is (R)-3-hydroxydecanoyl-ACP:CoA transacylase (phaG) of Pseudomonas putida (strain ATCC 47054 / DSM 6125 / CFBP 8728 / NCIMB 11950 / KT2440).